The primary structure comprises 380 residues: Cytochrome b (380 aa).

Transmembrane regions (helical) follow at residues 33–53, 77–98, 113–133, and 178–198; these read FGSL…FLAM, WLIR…YLHV, WNIG…GYVL, and FFAF…IHLL. Heme b is bound by residues histidine 83 and histidine 97. Residues histidine 182 and histidine 196 each coordinate heme b. Histidine 201 contacts a ubiquinone. 4 consecutive transmembrane segments (helical) span residues 226 to 246, 288 to 308, 320 to 340, and 347 to 367; these read YKDL…ALFS, LGGV…PMLH, LSQI…WIGG, and FVLI…IALP.

This sequence belongs to the cytochrome b family. The cytochrome bc1 complex contains 3 respiratory subunits (MT-CYB, CYC1 and UQCRFS1), 2 core proteins (UQCRC1 and UQCRC2) and probably 6 low-molecular weight proteins. It depends on heme b as a cofactor.

The protein localises to the mitochondrion inner membrane. Component of the ubiquinol-cytochrome c reductase complex (complex III or cytochrome b-c1 complex) that is part of the mitochondrial respiratory chain. The b-c1 complex mediates electron transfer from ubiquinol to cytochrome c. Contributes to the generation of a proton gradient across the mitochondrial membrane that is then used for ATP synthesis. The polypeptide is Cytochrome b (mt-cyb) (Acipenser transmontanus (White sturgeon)).